Here is a 243-residue protein sequence, read N- to C-terminus: Orotidine 5'-phosphate decarboxylase (243 aa).

Substrate is bound by residues Asp-18, Lys-39, Asp-66–Thr-75, Thr-130, Arg-192, Gln-201, Gly-221, and Arg-222. Lys-68 functions as the Proton donor in the catalytic mechanism.

The protein belongs to the OMP decarboxylase family. Type 1 subfamily. In terms of assembly, homodimer.

It carries out the reaction orotidine 5'-phosphate + H(+) = UMP + CO2. Its pathway is pyrimidine metabolism; UMP biosynthesis via de novo pathway; UMP from orotate: step 2/2. Its function is as follows. Catalyzes the decarboxylation of orotidine 5'-monophosphate (OMP) to uridine 5'-monophosphate (UMP). The sequence is that of Orotidine 5'-phosphate decarboxylase from Synechococcus sp. (strain WH7803).